We begin with the raw amino-acid sequence, 1040 residues long: Regulator of telomere elongation helicase 1 homolog (1040 aa).

A Helicase ATP-binding domain is found at 52–355 (RGINVEFPFE…KGLLLKLQEL (304 aa)). 87-94 (SPTGTGKT) lines the ATP pocket. The interval 117–137 (RKNSAIPWSDSDEPLSQSGGG) is disordered. Cysteine 181, cysteine 202, cysteine 210, and cysteine 246 together coordinate [4Fe-4S] cluster. The DEAH box signature appears at 289-292 (DEAH). A disordered region spans residues 926–949 (KVPESQGSASSSVLTAKGNGGGDK). A compositionally biased stretch (polar residues) spans 930-939 (SQGSASSSVL). A PIP-box; degenerate motif is present at residues 992–999 (QSIVQLFC).

The protein belongs to the helicase family. RAD3/XPD subfamily.

Its subcellular location is the nucleus. It carries out the reaction ATP + H2O = ADP + phosphate + H(+). Its function is as follows. A probable ATP-dependent DNA helicase implicated in DNA replication, DNA repair and the maintenance of genomic stability. Acts as an anti-recombinase to counteract toxic recombination and limit crossover during meiosis. Regulates meiotic recombination and crossover homeostasis by physically dissociating strand invasion events and thereby promotes noncrossover repair by meiotic synthesis dependent strand annealing (SDSA) as well as disassembly of D loop recombination intermediates. Also plays a role in preserving the stability of 45S rDNA repeats. The protein is Regulator of telomere elongation helicase 1 homolog of Arabidopsis thaliana (Mouse-ear cress).